Consider the following 466-residue polypeptide: Soluble pyridine nucleotide transhydrogenase (466 aa).

FAD is bound at residue 36–45; the sequence is ERYQNVGGGC.

The protein belongs to the class-I pyridine nucleotide-disulfide oxidoreductase family. The cofactor is FAD.

The protein localises to the cytoplasm. It catalyses the reaction NAD(+) + NADPH = NADH + NADP(+). Conversion of NADPH, generated by peripheral catabolic pathways, to NADH, which can enter the respiratory chain for energy generation. The chain is Soluble pyridine nucleotide transhydrogenase from Escherichia coli O6:K15:H31 (strain 536 / UPEC).